A 201-amino-acid polypeptide reads, in one-letter code: Protamine-like protein 99C (201 aa).

The disordered stretch occupies residues 93-143; the sequence is GGQQSSCQRQSPSARLRESERRSSRSKTLCRSAKNRQRGKPKPQQSKRRLS. Positions 94–104 are enriched in polar residues; the sequence is GQQSSCQRQSP. The segment covering 125–143 has biased composition (basic residues); the sequence is AKNRQRGKPKPQQSKRRLS.

This sequence belongs to the UPF0771 family.

The protein localises to the nucleus. The protein resides in the chromosome. Regulates chromatin compaction in spermatid nuclei and is essential for male fertility. Functions in parallel with other chromatin-condensing proteins such as ProtA, ProtB and Mst77F. The polypeptide is Protamine-like protein 99C (Drosophila melanogaster (Fruit fly)).